A 678-amino-acid polypeptide reads, in one-letter code: UvrABC system protein C (678 aa).

One can recognise a GIY-YIG domain in the interval 16–95 (VEPGVYRFRD…IKEFDPRFNI (80 aa)). The 36-residue stretch at 208–243 (DRLIREMEQQMTAAAEDLDFERAARLRDNIGAMRRA) folds into the UVR domain. Positions 649-667 (EAPPEPGAEAPPDSGAAAA) are enriched in low complexity. Positions 649–678 (EAPPEPGAEAPPDSGAAAAVMGNDQSRVPG) are disordered.

It belongs to the UvrC family. Interacts with UvrB in an incision complex.

It localises to the cytoplasm. The UvrABC repair system catalyzes the recognition and processing of DNA lesions. UvrC both incises the 5' and 3' sides of the lesion. The N-terminal half is responsible for the 3' incision and the C-terminal half is responsible for the 5' incision. This Mycolicibacterium gilvum (strain PYR-GCK) (Mycobacterium gilvum (strain PYR-GCK)) protein is UvrABC system protein C.